The chain runs to 270 residues: MIOREX complex component 3 (270 aa).

Residues 1-12 (MSRTIPFLFKLV) constitute a mitochondrion transit peptide.

In terms of assembly, associates with the mitochondrial ribosome.

It is found in the mitochondrion. Functionally, component of MIOREX complexes, large expressome-like assemblies of ribosomes with factors involved in all the steps of post-transcriptional gene expression. This chain is MIOREX complex component 3, found in Saccharomyces cerevisiae (strain ATCC 204508 / S288c) (Baker's yeast).